We begin with the raw amino-acid sequence, 310 residues long: Forkhead box protein pes-1 (310 aa).

Residues 1–16 (MLPLSISTSPDPASQF) are compositionally biased toward polar residues. Disordered regions lie at residues 1-37 (MLPL…GTAK), 58-77 (VSPS…SPAP), 92-126 (KQSS…SNPN), and 217-242 (SLRR…PNPI). Positions 17–35 (PTVPDLPTLTPTPSPTSGT) are enriched in low complexity. Residues 128–220 (RPAYSYNALI…IGKDCGSLRR (93 aa)) constitute a DNA-binding region (fork-head). Over residues 218–231 (LRRKKNGKPRKYSK) the composition is skewed to basic residues.

The protein resides in the nucleus. It is found in the cytoplasm. Its function is as follows. Transcription factor. Plays a role in embryogenesis and later development, perhaps acting redundantly with forkhead protein fkh-2. The chain is Forkhead box protein pes-1 from Caenorhabditis briggsae.